Here is a 428-residue protein sequence, read N- to C-terminus: 5-methylthioadenosine/S-adenosylhomocysteine deaminase (428 aa).

The Zn(2+) site is built by H65 and H67. 3 residues coordinate substrate: E94, R158, and H184. H211 is a binding site for Zn(2+). E214 and D299 together coordinate substrate. D299 is a binding site for Zn(2+).

It belongs to the metallo-dependent hydrolases superfamily. MTA/SAH deaminase family. The cofactor is Zn(2+).

The enzyme catalyses S-adenosyl-L-homocysteine + H2O + H(+) = S-inosyl-L-homocysteine + NH4(+). It catalyses the reaction S-methyl-5'-thioadenosine + H2O + H(+) = S-methyl-5'-thioinosine + NH4(+). In terms of biological role, catalyzes the deamination of 5-methylthioadenosine and S-adenosyl-L-homocysteine into 5-methylthioinosine and S-inosyl-L-homocysteine, respectively. Is also able to deaminate adenosine. The sequence is that of 5-methylthioadenosine/S-adenosylhomocysteine deaminase from Moorella thermoacetica (strain ATCC 39073 / JCM 9320).